Here is a 261-residue protein sequence, read N- to C-terminus: Acyl-[acyl-carrier-protein]--UDP-N-acetylglucosamine O-acyltransferase (261 aa).

Belongs to the transferase hexapeptide repeat family. LpxA subfamily. In terms of assembly, homotrimer.

Its subcellular location is the cytoplasm. The enzyme catalyses a (3R)-hydroxyacyl-[ACP] + UDP-N-acetyl-alpha-D-glucosamine = a UDP-3-O-[(3R)-3-hydroxyacyl]-N-acetyl-alpha-D-glucosamine + holo-[ACP]. Its pathway is glycolipid biosynthesis; lipid IV(A) biosynthesis; lipid IV(A) from (3R)-3-hydroxytetradecanoyl-[acyl-carrier-protein] and UDP-N-acetyl-alpha-D-glucosamine: step 1/6. In terms of biological role, involved in the biosynthesis of lipid A, a phosphorylated glycolipid that anchors the lipopolysaccharide to the outer membrane of the cell. The sequence is that of Acyl-[acyl-carrier-protein]--UDP-N-acetylglucosamine O-acyltransferase from Aquifex aeolicus (strain VF5).